The following is a 464-amino-acid chain: MGKEKTHINIVVIGHVDSGKSTTTGHLIYKCGGIDKRTIEKFEKEAQEMGKGSFKYAWVLDKLKAERERGIQIDIALWKFETPKYYITIIDAPGHRDFIKNMITGTSQADCAVLVVACGTGEFEAGISKNGQTREHALLAQTLGVKQMIVACNKMDSTDPPFSEARFGEVTTEVSNYIKKIGYNPKSIPFVPISGFNGDNMLEPSANMPWFKGWSVERKEGTMTGKTLLEALDSVVPPQRPTDKPLRLPLQDVYKIGGIGTVPVGRVETGILKPGMIVTFAPQNLTTEVKSVEMHHEALQEALPGDNVGFNVKNISIKDIRRGSVASDSKNDPAKETKMFTAQVIIMNHPGQISAGYTPVLDCHTAHIACKFAELKEKVDRRSGKKVEDNPKSLKSGDAGIIDLIPTKPLCVETFTEYPPLGRFAVRDMRQTVAVGVIKNVDKSEGVGKVQKAAQKAGVGGKKK.

Positions 5-242 (KTHINIVVIG…DSVVPPQRPT (238 aa)) constitute a tr-type G domain. GTP-binding positions include 14-21 (GHVDSGKS), 91-95 (DAPGH), and 153-156 (NKMD). 2 positions are modified to 5-glutamyl glycerylphosphorylethanolamine: Glu-301 and Glu-374.

The protein belongs to the TRAFAC class translation factor GTPase superfamily. Classic translation factor GTPase family. EF-Tu/EF-1A subfamily.

It is found in the cytoplasm. This protein promotes the GTP-dependent binding of aminoacyl-tRNA to the A-site of ribosomes during protein biosynthesis. This is Elongation factor 1-alpha from Onchocerca volvulus.